A 123-amino-acid chain; its full sequence is Fluoride-specific ion channel FluC (123 aa).

The next 4 helical transmembrane spans lie at 1-21 (MQWL…GWLA), 32-52 (LGTL…LVWF), 66-86 (FVIT…VEVF), and 99-119 (GLIG…FYFF). Na(+) contacts are provided by G73 and T76.

The protein belongs to the fluoride channel Fluc/FEX (TC 1.A.43) family.

Its subcellular location is the cell inner membrane. The catalysed reaction is fluoride(in) = fluoride(out). Na(+) is not transported, but it plays an essential structural role and its presence is essential for fluoride channel function. Fluoride-specific ion channel. Important for reducing fluoride concentration in the cell, thus reducing its toxicity. The chain is Fluoride-specific ion channel FluC from Psychrobacter cryohalolentis (strain ATCC BAA-1226 / DSM 17306 / VKM B-2378 / K5).